Consider the following 156-residue polypeptide: MSRRNAAVKRPILPDPQFNSRLASMMVARLMKHGKKSTAQRILSDAFGLIGERTGADPLEVFETAVRNSTPLVEVRARRVGGATYQVPMEVRQERGTAMALRWLVNFSRSRGGRSMAQKLAGELMDAANEAGSAVRKREETHKMAEANKAFAHYRY.

It belongs to the universal ribosomal protein uS7 family. As to quaternary structure, part of the 30S ribosomal subunit. Contacts proteins S9 and S11.

In terms of biological role, one of the primary rRNA binding proteins, it binds directly to 16S rRNA where it nucleates assembly of the head domain of the 30S subunit. Is located at the subunit interface close to the decoding center, probably blocks exit of the E-site tRNA. The sequence is that of Small ribosomal subunit protein uS7 from Synechococcus sp. (strain RCC307).